We begin with the raw amino-acid sequence, 317 residues long: 3-oxoacyl-[acyl-carrier-protein] reductase 5, chloroplastic (317 aa).

The N-terminal 57 residues, 1–57 (TTVAATKLTSLKATAGKLGYREICQVRQWAPLKSAMPHFGMLRCATSTVVKAQAQAQ), are a transit peptide targeting the chloroplast. Residue 79 to 103 (VTGASRGIGKAIALSLGKAGCKVLV) participates in NADP(+) binding. S211 provides a ligand contact to substrate. Y224 functions as the Proton acceptor in the catalytic mechanism.

It belongs to the short-chain dehydrogenases/reductases (SDR) family. As to quaternary structure, homotetramer.

It is found in the plastid. The protein localises to the chloroplast. It catalyses the reaction a (3R)-hydroxyacyl-[ACP] + NADP(+) = a 3-oxoacyl-[ACP] + NADPH + H(+). Its pathway is lipid metabolism; fatty acid biosynthesis. In Brassica napus (Rape), this protein is 3-oxoacyl-[acyl-carrier-protein] reductase 5, chloroplastic (bkr1).